Here is a 125-residue protein sequence, read N- to C-terminus: Small ribosomal subunit protein uS12m (125 aa).

A disordered region spans residues Met1 to Lys51. Over residues His10 to Ala23 the composition is skewed to basic and acidic residues.

This sequence belongs to the universal ribosomal protein uS12 family.

It localises to the mitochondrion. Functionally, protein S12 is involved in the translation initiation step. The polypeptide is Small ribosomal subunit protein uS12m (RPS12) (Nicotiana sylvestris (Wood tobacco)).